Consider the following 205-residue polypeptide: dITP/XTP pyrophosphatase (205 aa).

Serine 8–lysine 13 is a binding site for substrate. Aspartate 69 acts as the Proton acceptor in catalysis. Residue aspartate 69 coordinates Mg(2+). Substrate contacts are provided by residues serine 70, histidine 153 to aspartate 156, lysine 176, and histidine 181 to arginine 182.

It belongs to the HAM1 NTPase family. Homodimer. The cofactor is Mg(2+).

The catalysed reaction is XTP + H2O = XMP + diphosphate + H(+). It carries out the reaction dITP + H2O = dIMP + diphosphate + H(+). The enzyme catalyses ITP + H2O = IMP + diphosphate + H(+). Functionally, pyrophosphatase that catalyzes the hydrolysis of nucleoside triphosphates to their monophosphate derivatives, with a high preference for the non-canonical purine nucleotides XTP (xanthosine triphosphate), dITP (deoxyinosine triphosphate) and ITP. Seems to function as a house-cleaning enzyme that removes non-canonical purine nucleotides from the nucleotide pool, thus preventing their incorporation into DNA/RNA and avoiding chromosomal lesions. This Shewanella oneidensis (strain ATCC 700550 / JCM 31522 / CIP 106686 / LMG 19005 / NCIMB 14063 / MR-1) protein is dITP/XTP pyrophosphatase.